Here is a 219-residue protein sequence, read N- to C-terminus: MSLLNNKAGVISRLADFLGFRPKTGDIDVMNRQSVGSVTISQLAKGFYEPNIESAINDVHNFSIKDVGTIITNKTGVSPEGVSQTDYWAFSGTVTDDSLPPGSPITVLVFGLPVSATTGMTAIEFVAKVRVALQEAIASFTAINSYKDHPTDGSKLEVTYLDNQKHVLSTYSTYGITISQEIISESKPGYGTWNLLGAQTVTLDNQQTPTVFYHFERTA.

In terms of assembly, homotrimer. The gp11 trimer interacts with gp10 trimer and with the short tail fiber (STF) composed of the gp12 trimer. Part of the baseplate macromolecular complex which consists of gp5, gp5.4, gp27 (central spike complex); gp6, gp25, gp53 (inner baseplate); gp7, gp8 (intermediate baseplate); gp9, gp10, gp11, gp12 (peripheral); gp48 and gp54 (proximal region of the tail tube).

It is found in the virion. In terms of biological role, baseplate protein that is part of the baseplate wedge and that connects the short tail fibers to the baseplate. Involved in the tail assembly. The sequence is that of Baseplate wedge protein gp11 (11) from Enterobacteria phage T4 (Bacteriophage T4).